The primary structure comprises 218 residues: Pyridoxine/pyridoxamine 5'-phosphate oxidase (218 aa).

Residues 12 to 15 (RMSY) and R70 contribute to the substrate site. FMN-binding positions include 65 to 70 (RTVLLR), 80 to 81 (YT), K87, and Q109. The substrate site is built by Y127, R131, and S135. Residues 145–146 (QS) and W191 each bind FMN. 197–199 (RLH) provides a ligand contact to substrate. Residue R201 participates in FMN binding.

This sequence belongs to the pyridoxamine 5'-phosphate oxidase family. As to quaternary structure, homodimer. FMN is required as a cofactor.

It catalyses the reaction pyridoxamine 5'-phosphate + O2 + H2O = pyridoxal 5'-phosphate + H2O2 + NH4(+). The enzyme catalyses pyridoxine 5'-phosphate + O2 = pyridoxal 5'-phosphate + H2O2. The protein operates within cofactor metabolism; pyridoxal 5'-phosphate salvage; pyridoxal 5'-phosphate from pyridoxamine 5'-phosphate: step 1/1. It functions in the pathway cofactor metabolism; pyridoxal 5'-phosphate salvage; pyridoxal 5'-phosphate from pyridoxine 5'-phosphate: step 1/1. Its function is as follows. Catalyzes the oxidation of either pyridoxine 5'-phosphate (PNP) or pyridoxamine 5'-phosphate (PMP) into pyridoxal 5'-phosphate (PLP). The sequence is that of Pyridoxine/pyridoxamine 5'-phosphate oxidase from Acinetobacter baylyi (strain ATCC 33305 / BD413 / ADP1).